The following is a 60-amino-acid chain: Large ribosomal subunit protein bL32 (60 aa).

The protein belongs to the bacterial ribosomal protein bL32 family.

The sequence is that of Large ribosomal subunit protein bL32 from Thermosipho africanus (strain TCF52B).